A 182-amino-acid chain; its full sequence is Putative manganese efflux pump MntP (182 aa).

6 consecutive transmembrane segments (helical) span residues 6-26 (LIPL…VSLG), 37-57 (ILYI…IGMV), 71-91 (HFAG…SSIL), 101-121 (IGIS…SVGL), 131-151 (IITI…GLFI), and 162-182 (YGEI…LFPI).

The protein belongs to the MntP (TC 9.B.29) family.

Its subcellular location is the cell membrane. Probably functions as a manganese efflux pump. The sequence is that of Putative manganese efflux pump MntP from Bacillus thuringiensis subsp. konkukian (strain 97-27).